The sequence spans 282 residues: Pantothenate synthetase (282 aa).

26 to 33 contributes to the ATP binding site; sequence MGNLHDGH. The active-site Proton donor is H33. (R)-pantoate is bound at residue Q57. Residue Q57 coordinates beta-alanine. 148–151 contacts ATP; sequence GKKD. Q154 contacts (R)-pantoate. 185–188 contacts ATP; sequence LSSR.

It belongs to the pantothenate synthetase family. Homodimer.

Its subcellular location is the cytoplasm. It catalyses the reaction (R)-pantoate + beta-alanine + ATP = (R)-pantothenate + AMP + diphosphate + H(+). Its pathway is cofactor biosynthesis; (R)-pantothenate biosynthesis; (R)-pantothenate from (R)-pantoate and beta-alanine: step 1/1. Its function is as follows. Catalyzes the condensation of pantoate with beta-alanine in an ATP-dependent reaction via a pantoyl-adenylate intermediate. The sequence is that of Pantothenate synthetase from Polaromonas sp. (strain JS666 / ATCC BAA-500).